We begin with the raw amino-acid sequence, 283 residues long: NFU1 iron-sulfur cluster scaffold homolog, mitochondrial (283 aa).

The transit peptide at 1-65 (MSKFLSQAAI…ELRMPVACRR (65 aa)) directs the protein to the mitochondrion. Residues 182-250 (IKELLDTRIR…IPEVESVEQV (69 aa)) form a nifU region. The [4Fe-4S] cluster site is built by Cys-219 and Cys-222.

Belongs to the NifU family.

It is found in the mitochondrion. In terms of biological role, molecular scaffold for [Fe-S] cluster assembly of mitochondrial iron-sulfur proteins. The protein is NFU1 iron-sulfur cluster scaffold homolog, mitochondrial of Drosophila simulans (Fruit fly).